The primary structure comprises 225 residues: uncharacterized protein (225 aa).

This is an uncharacterized protein from Mycoplasma genitalium (strain ATCC 33530 / DSM 19775 / NCTC 10195 / G37) (Mycoplasmoides genitalium).